A 402-amino-acid chain; its full sequence is Probable tRNA pseudouridine synthase D (402 aa).

Aspartate 94 acts as the Nucleophile in catalysis. The TRUD domain maps to 175 to 364; the sequence is YILNYYGTQR…PGTRRKLITK (190 aa).

It belongs to the pseudouridine synthase TruD family.

It catalyses the reaction uridine(13) in tRNA = pseudouridine(13) in tRNA. In terms of biological role, could be responsible for synthesis of pseudouridine from uracil-13 in transfer RNAs. In Methanococcus aeolicus (strain ATCC BAA-1280 / DSM 17508 / OCM 812 / Nankai-3), this protein is Probable tRNA pseudouridine synthase D.